We begin with the raw amino-acid sequence, 700 residues long: Elongation factor G (700 aa).

The tr-type G domain occupies 10 to 286 (NKVRNIGIMA…AVIDYLPNPL (277 aa)). GTP is bound by residues 19-26 (AHIDAGKT), 83-87 (DTPGH), and 137-140 (NKMD).

Belongs to the TRAFAC class translation factor GTPase superfamily. Classic translation factor GTPase family. EF-G/EF-2 subfamily.

It localises to the cytoplasm. Catalyzes the GTP-dependent ribosomal translocation step during translation elongation. During this step, the ribosome changes from the pre-translocational (PRE) to the post-translocational (POST) state as the newly formed A-site-bound peptidyl-tRNA and P-site-bound deacylated tRNA move to the P and E sites, respectively. Catalyzes the coordinated movement of the two tRNA molecules, the mRNA and conformational changes in the ribosome. This is Elongation factor G from Rhodococcus erythropolis (strain PR4 / NBRC 100887).